The chain runs to 264 residues: Phosphate import ATP-binding protein PstB 1 (264 aa).

The ABC transporter domain maps to 20 to 259 (LETRDLNIFY…PKIKLTEDYI (240 aa)). 52–59 (GASGSGKS) is a binding site for ATP.

The protein belongs to the ABC transporter superfamily. Phosphate importer (TC 3.A.1.7) family. In terms of assembly, the complex is composed of two ATP-binding proteins (PstB), two transmembrane proteins (PstC and PstA) and a solute-binding protein (PstS).

It localises to the cell membrane. It catalyses the reaction phosphate(out) + ATP + H2O = ADP + 2 phosphate(in) + H(+). In terms of biological role, part of the ABC transporter complex PstSACB involved in phosphate import. Responsible for energy coupling to the transport system. In Ligilactobacillus salivarius (strain UCC118) (Lactobacillus salivarius), this protein is Phosphate import ATP-binding protein PstB 1.